Reading from the N-terminus, the 198-residue chain is Outer-membrane lipoprotein carrier protein (198 aa).

Positions 1–17 (MKKFLFSLCLLSSTVLA) are cleaved as a signal peptide.

This sequence belongs to the LolA family. Monomer.

The protein localises to the periplasm. In terms of biological role, participates in the translocation of lipoproteins from the inner membrane to the outer membrane. Only forms a complex with a lipoprotein if the residue after the N-terminal Cys is not an aspartate (The Asp acts as a targeting signal to indicate that the lipoprotein should stay in the inner membrane). The protein is Outer-membrane lipoprotein carrier protein of Aliivibrio fischeri (strain MJ11) (Vibrio fischeri).